A 914-amino-acid chain; its full sequence is DENN domain-containing protein 2C (914 aa).

The segment at 46–98 (FGVRYNCHQESPPHKRPTGEERNGALPRNTDVKSRDQSEDEGEGGECRGSHPS) is disordered. Basic and acidic residues predominate over residues 56 to 68 (SPPHKRPTGEERN). The residue at position 261 (serine 261) is a Phosphoserine. A disordered region spans residues 411-446 (GKKRVKLQPYTGKEAPSSKGETSGNESDAEYLPKNR). The 148-residue stretch at 480–627 (ELFVVVSLQK…PFPAPGRTIT (148 aa)) folds into the uDENN domain. The 134-residue stretch at 649–782 (RLEHVDFECL…LQAALVQILE (134 aa)) folds into the cDENN domain. A dDENN domain is found at 784-874 (RDEVLAQEQQ…QDRELRQSGV (91 aa)).

Its function is as follows. Guanine nucleotide exchange factor (GEF) which may activate RAB9A and RAB9B. Promotes the exchange of GDP to GTP, converting inactive GDP-bound Rab proteins into their active GTP-bound form. This chain is DENN domain-containing protein 2C (Dennd2c), found in Mus musculus (Mouse).